We begin with the raw amino-acid sequence, 262 residues long: Indole-3-glycerol phosphate synthase (262 aa).

This sequence belongs to the TrpC family.

The catalysed reaction is 1-(2-carboxyphenylamino)-1-deoxy-D-ribulose 5-phosphate + H(+) = (1S,2R)-1-C-(indol-3-yl)glycerol 3-phosphate + CO2 + H2O. Its pathway is amino-acid biosynthesis; L-tryptophan biosynthesis; L-tryptophan from chorismate: step 4/5. In Bordetella bronchiseptica (strain ATCC BAA-588 / NCTC 13252 / RB50) (Alcaligenes bronchisepticus), this protein is Indole-3-glycerol phosphate synthase.